Consider the following 483-residue polypeptide: ATP synthase subunit beta (483 aa).

Residue 169-176 coordinates ATP; it reads GGAGVGKT.

This sequence belongs to the ATPase alpha/beta chains family. F-type ATPases have 2 components, CF(1) - the catalytic core - and CF(0) - the membrane proton channel. CF(1) has five subunits: alpha(3), beta(3), gamma(1), delta(1), epsilon(1). CF(0) has three main subunits: a(1), b(2) and c(9-12). The alpha and beta chains form an alternating ring which encloses part of the gamma chain. CF(1) is attached to CF(0) by a central stalk formed by the gamma and epsilon chains, while a peripheral stalk is formed by the delta and b chains.

It is found in the cell membrane. The catalysed reaction is ATP + H2O + 4 H(+)(in) = ADP + phosphate + 5 H(+)(out). In terms of biological role, produces ATP from ADP in the presence of a proton gradient across the membrane. The catalytic sites are hosted primarily by the beta subunits. This chain is ATP synthase subunit beta, found in Rhodococcus erythropolis (strain PR4 / NBRC 100887).